The following is a 118-amino-acid chain: MAEKRTLIAVIADEDTTTGLLLAGIGQITPETQEKNFFVYQEGKTTKEEITDKFNHFTEERDDIAILLINQHIAENIRARVDSFTNAFPAILEIPSKDHPYDPEKDSVLKRVRKLFGE.

This sequence belongs to the V-ATPase F subunit family. In terms of assembly, V-ATPase is a heteromultimeric enzyme composed of a peripheral catalytic V1 complex (components A to H) attached to an integral membrane V0 proton pore complex (components: a, c, c', c'', d, e, f and VOA1).

It localises to the vacuole membrane. In terms of biological role, subunit of the V1 complex of vacuolar(H+)-ATPase (V-ATPase), a multisubunit enzyme composed of a peripheral complex (V1) that hydrolyzes ATP and a membrane integral complex (V0) that translocates protons. V-ATPase is responsible for acidifying and maintaining the pH of intracellular compartments. The chain is V-type proton ATPase subunit F from Saccharomyces cerevisiae (strain ATCC 204508 / S288c) (Baker's yeast).